Consider the following 416-residue polypeptide: MKVLVIGGGAREHALCRSLSLDPDVTALHCAPGNAGIAEVAELHQVDALDGAAVTALAGRLGAELVVVGPEAPLVAGVADAVREAGIPVFGPSGEAARLEGSKAFAKDVMACAGVPTARSYVCTNPAEVDAALAAFGAPYVVKDDGLAAGKGVVVTDDVEAARAHANACDRVVVEEFLDGPEVSLFAVTDGENVRPLQPAQDFKRALDGDEGPNTGGMGAYSPLPWADPKLVDEVVQSVLQPTVDEMRRRGTPFSGLLYAGLAITSRGVRVIEFNARFGDPETQVVLARLKTPLAGLLMAAATGNLADLEPLRWSDEAAVTVVVASHNYPGTPRTGDPITGLDEVAAQDAPHAYVLHAGTRAEGDAVVSAGGRVLSVTATGADLTEARDRAYRAVARIGLDGSQHRTDIAAKAAGA.

The ATP-grasp domain occupies 107-303; that stretch reads KDVMACAGVP…LAGLLMAAAT (197 aa). 133 to 184 is an ATP binding site; sequence LAAFGAPYVVKDDGLAAGKGVVVTDDVEAARAHANACDRVVVEEFLDGPEVS. Mg(2+) contacts are provided by E273 and N275.

Belongs to the GARS family. It depends on Mg(2+) as a cofactor. Mn(2+) serves as cofactor.

It carries out the reaction 5-phospho-beta-D-ribosylamine + glycine + ATP = N(1)-(5-phospho-beta-D-ribosyl)glycinamide + ADP + phosphate + H(+). Its pathway is purine metabolism; IMP biosynthesis via de novo pathway; N(1)-(5-phospho-D-ribosyl)glycinamide from 5-phospho-alpha-D-ribose 1-diphosphate: step 2/2. This is Phosphoribosylamine--glycine ligase from Streptomyces coelicolor (strain ATCC BAA-471 / A3(2) / M145).